Reading from the N-terminus, the 728-residue chain is Cytosolic endo-beta-N-acetylglucosaminidase (728 aa).

Residues glutamine 287 to tryptophan 381 form the BRCT domain.

This sequence belongs to the glycosyl hydrolase 85 family.

The protein resides in the cytoplasm. The protein localises to the cytosol. It catalyses the reaction an N(4)-(oligosaccharide-(1-&gt;3)-[oligosaccharide-(1-&gt;6)]-beta-D-Man-(1-&gt;4)-beta-D-GlcNAc-(1-&gt;4)-alpha-D-GlcNAc)-L-asparaginyl-[protein] + H2O = an oligosaccharide-(1-&gt;3)-[oligosaccharide-(1-&gt;6)]-beta-D-Man-(1-&gt;4)-D-GlcNAc + N(4)-(N-acetyl-beta-D-glucosaminyl)-L-asparaginyl-[protein]. Its function is as follows. Endoglycosidase that releases N-glycans from glycoproteins by cleaving the beta-1,4-glycosidic bond in the N,N'-diacetylchitobiose core. Involved in the processing of free oligosaccharides in the cytosol. This Gallus gallus (Chicken) protein is Cytosolic endo-beta-N-acetylglucosaminidase (ENGASE).